Reading from the N-terminus, the 561-residue chain is Inner membrane ABC transporter ATP-binding protein YddA (561 aa).

Over 1–3 the chain is Cytoplasmic; sequence MIT. Residues 4-24 form a helical membrane-spanning segment; the sequence is IPITLRMLIAKYLCLLKPFWL. At 25 to 31 the chain is on the periplasmic side; the sequence is RKNNKTS. Residues 32-52 form a helical membrane-spanning segment; the sequence is VLLIIIILAMILGVVKIQVWL. The 303-residue stretch at 35 to 337 folds into the ABC transmembrane type-1 domain; sequence IIIILAMILG…FIYKYDELAE (303 aa). Residues 53-70 lie on the Cytoplasmic side of the membrane; it reads NDWNNDFFNALSQKETDK. The helical transmembrane segment at 71 to 91 threads the bilayer; it reads LWQLVLWFPALLGIFVLISVN. Over 92–151 the chain is Periplasmic; the sequence is KTWLIKLLTIRWREWLTDYYLNRWFADKNYYFTQIYGEHKNTDNPDQRIAEDILLLISKT. Residues 152–172 traverse the membrane as a helical segment; it reads LSLSFGFIQSLSMLITFTVIL. At 173–187 the chain is on the cytoplasmic side; it reads WESAGTLSFTVGGTE. Residues 188–208 form a helical membrane-spanning segment; the sequence is WNIQGYMVYTVVLIVIGGTLF. Topologically, residues 209–290 are periplasmic; that stretch reads THKVGKRIRP…WQNIYSRSLS (82 aa). The helical transmembrane segment at 291 to 311 threads the bilayer; sequence VLPYFLLLPQFISGQINLGGL. The Cytoplasmic segment spans residues 312–561; it reads MKSRQAFMLV…DDICDISAVL (250 aa). Residues 367-561 enclose the ABC transporter domain; the sequence is VQVADASIRT…DDICDISAVL (195 aa). ATP is bound at residue 400-407; that stretch reads GYSGAGKT.

Belongs to the ABC transporter superfamily.

It localises to the cell inner membrane. In Escherichia coli (strain K12), this protein is Inner membrane ABC transporter ATP-binding protein YddA (yddA).